A 197-amino-acid polypeptide reads, in one-letter code: Small ribosomal subunit protein uS4c (197 aa).

In terms of domain architecture, S4 RNA-binding spans Met84–Leu143.

This sequence belongs to the universal ribosomal protein uS4 family. As to quaternary structure, part of the 30S ribosomal subunit. Contacts protein S5. The interaction surface between S4 and S5 is involved in control of translational fidelity.

The protein localises to the plastid. The protein resides in the chloroplast. One of the primary rRNA binding proteins, it binds directly to 16S rRNA where it nucleates assembly of the body of the 30S subunit. In terms of biological role, with S5 and S12 plays an important role in translational accuracy. This chain is Small ribosomal subunit protein uS4c (rps4), found in Adiantum capillus-veneris (Maidenhair fern).